A 511-amino-acid chain; its full sequence is AMP phosphorylase (511 aa).

AMP-binding positions include glycine 168, serine 194 to serine 199, and threonine 203. Aspartate 256 functions as the Proton donor in the catalytic mechanism. 2 residues coordinate AMP: serine 262 and lysine 286.

This sequence belongs to the thymidine/pyrimidine-nucleoside phosphorylase family. Type 2 subfamily.

The catalysed reaction is AMP + phosphate = alpha-D-ribose 1,5-bisphosphate + adenine. It catalyses the reaction CMP + phosphate = cytosine + alpha-D-ribose 1,5-bisphosphate. It carries out the reaction UMP + phosphate = alpha-D-ribose 1,5-bisphosphate + uracil. Catalyzes the conversion of AMP and phosphate to adenine and ribose 1,5-bisphosphate (R15P). Exhibits phosphorylase activity toward CMP and UMP in addition to AMP. Functions in an archaeal AMP degradation pathway, together with R15P isomerase and RubisCO. The chain is AMP phosphorylase from Thermofilum pendens (strain DSM 2475 / Hrk 5).